The chain runs to 378 residues: Putative glycosyltransferase ORF378 (378 aa).

Belongs to the glycosyltransferase group 1 family. Glycosyltransferase 4 subfamily.

The sequence is that of Putative glycosyltransferase ORF378 from Acidianus sp. F28 (AFV-2).